A 198-amino-acid polypeptide reads, in one-letter code: FMN-dependent NADH:quinone oxidoreductase (198 aa).

Residue 96–99 (MYNF) coordinates FMN.

This sequence belongs to the azoreductase type 1 family. As to quaternary structure, homodimer. FMN is required as a cofactor.

The catalysed reaction is 2 a quinone + NADH + H(+) = 2 a 1,4-benzosemiquinone + NAD(+). It carries out the reaction N,N-dimethyl-1,4-phenylenediamine + anthranilate + 2 NAD(+) = 2-(4-dimethylaminophenyl)diazenylbenzoate + 2 NADH + 2 H(+). Its function is as follows. Quinone reductase that provides resistance to thiol-specific stress caused by electrophilic quinones. In terms of biological role, also exhibits azoreductase activity. Catalyzes the reductive cleavage of the azo bond in aromatic azo compounds to the corresponding amines. The sequence is that of FMN-dependent NADH:quinone oxidoreductase from Burkholderia mallei (strain ATCC 23344).